We begin with the raw amino-acid sequence, 67 residues long: Large ribosomal subunit protein uL29 (67 aa).

The protein belongs to the universal ribosomal protein uL29 family.

The sequence is that of Large ribosomal subunit protein uL29 from Exiguobacterium sibiricum (strain DSM 17290 / CCUG 55495 / CIP 109462 / JCM 13490 / 255-15).